The chain runs to 107 residues: U1-lycotoxin-Ls1b (107 aa).

Positions 1–20 (MMKVLVVVALLVTLISYSSG) are cleaved as a signal peptide. A propeptide spanning residues 21 to 41 (EGIDDLEADELLSLMANEQTR) is cleaved from the precursor. Disulfide bonds link C44-C59, C51-C68, C58-C86, and C70-C84.

The protein belongs to the neurotoxin 19 (CSTX) family. 04 (U1-Lctx) subfamily. Expressed by the venom gland.

It is found in the secreted. This Lycosa singoriensis (Wolf spider) protein is U1-lycotoxin-Ls1b.